A 427-amino-acid polypeptide reads, in one-letter code: Serine--tRNA ligase (427 aa).

L-serine is bound at residue 236-238 (TAE). 267-269 (RSE) provides a ligand contact to ATP. Glu290 provides a ligand contact to L-serine. 354 to 357 (EISS) lines the ATP pocket. Position 388 (Ser388) interacts with L-serine.

It belongs to the class-II aminoacyl-tRNA synthetase family. Type-1 seryl-tRNA synthetase subfamily. As to quaternary structure, homodimer. The tRNA molecule binds across the dimer.

Its subcellular location is the cytoplasm. It catalyses the reaction tRNA(Ser) + L-serine + ATP = L-seryl-tRNA(Ser) + AMP + diphosphate + H(+). The catalysed reaction is tRNA(Sec) + L-serine + ATP = L-seryl-tRNA(Sec) + AMP + diphosphate + H(+). It functions in the pathway aminoacyl-tRNA biosynthesis; selenocysteinyl-tRNA(Sec) biosynthesis; L-seryl-tRNA(Sec) from L-serine and tRNA(Sec): step 1/1. In terms of biological role, catalyzes the attachment of serine to tRNA(Ser). Is also able to aminoacylate tRNA(Sec) with serine, to form the misacylated tRNA L-seryl-tRNA(Sec), which will be further converted into selenocysteinyl-tRNA(Sec). In Psychrobacter arcticus (strain DSM 17307 / VKM B-2377 / 273-4), this protein is Serine--tRNA ligase.